The following is a 435-amino-acid chain: Serine--tRNA ligase (435 aa).

Residue Thr241–Glu243 participates in L-serine binding. Arg272–Glu274 serves as a coordination point for ATP. Glu295 is a binding site for L-serine. Glu359 to Ser362 is an ATP binding site. Position 395 (Ser395) interacts with L-serine.

The protein belongs to the class-II aminoacyl-tRNA synthetase family. Type-1 seryl-tRNA synthetase subfamily. In terms of assembly, homodimer. The tRNA molecule binds across the dimer.

The protein resides in the cytoplasm. The enzyme catalyses tRNA(Ser) + L-serine + ATP = L-seryl-tRNA(Ser) + AMP + diphosphate + H(+). The catalysed reaction is tRNA(Sec) + L-serine + ATP = L-seryl-tRNA(Sec) + AMP + diphosphate + H(+). Its pathway is aminoacyl-tRNA biosynthesis; selenocysteinyl-tRNA(Sec) biosynthesis; L-seryl-tRNA(Sec) from L-serine and tRNA(Sec): step 1/1. Catalyzes the attachment of serine to tRNA(Ser). Is also able to aminoacylate tRNA(Sec) with serine, to form the misacylated tRNA L-seryl-tRNA(Sec), which will be further converted into selenocysteinyl-tRNA(Sec). The sequence is that of Serine--tRNA ligase from Actinobacillus pleuropneumoniae serotype 5b (strain L20).